A 450-amino-acid chain; its full sequence is uncharacterized protein (450 aa).

12 helical membrane passes run 10–30 (IIVL…LVIA), 53–73 (LGGG…AIAI), 95–115 (TAGN…LFAI), 120–140 (LLPV…SIFN), 148–168 (AVAC…PVGF), 199–219 (LAML…IFIT), 242–262 (IANI…ATFA), 267–287 (TSST…CGIF), 302–322 (LMAM…VINA), 343–363 (IAAL…GSSF), 378–398 (LSFG…AALG), and 428–448 (VVPT…IAAM).

It is found in the cell membrane. This is an uncharacterized protein from Haemophilus influenzae (strain ATCC 51907 / DSM 11121 / KW20 / Rd).